Here is a 205-residue protein sequence, read N- to C-terminus: COP9 signalosome complex subunit 7 (205 aa).

The region spanning 1-135 (MEEKISQAID…QTLHVSWALE (135 aa)) is the PCI domain. Ser-183 carries the post-translational modification Phosphoserine.

The protein belongs to the CSN7/EIF3M family. CSN7 subfamily. As to quaternary structure, component of the COP9 signalosome (CSN) complex.

Its function is as follows. Component of the COP9 signalosome (CSN) complex that acts as an regulator of the ubiquitin (Ubl) conjugation pathway by mediating the deneddylation of the cullin subunit of SCF-type E3 ubiquitin-protein ligase complexes. The chain is COP9 signalosome complex subunit 7 (csn71) from Schizosaccharomyces pombe (strain 972 / ATCC 24843) (Fission yeast).